Reading from the N-terminus, the 1668-residue chain is Zinc finger CCCH domain-containing protein 13 (1668 aa).

Disordered regions lie at residues 1–38 and 56–157; these read MSKI…GSTA and TCRF…GDIN. Over residues 10-23 the composition is skewed to polar residues; it reads VENTKTISDSTSRR. The C3H1-type zinc finger occupies 36–64; it reads STAETQCRNWLKTGNCLYGNTCRFVHGPS. Ser-64 and Ser-77 each carry phosphoserine. The span at 76–136 shows a compositional bias: basic and acidic residues; that stretch reads RSPERPTGDL…IKITKERTPE (61 aa). Residues Lys-179 and Lys-194 each participate in a glycyl lysine isopeptide (Lys-Gly) (interchain with G-Cter in SUMO2) cross-link. 2 disordered regions span residues 190–1112 and 1125–1466; these read EIII…TATA and AAAT…PISD. Ser-198, Ser-207, Ser-209, and Ser-211 each carry phosphoserine. The segment covering 204-213 has biased composition (low complexity); the sequence is SKLSPSPSLR. A compositionally biased stretch (basic residues) spans 214 to 224; the sequence is KSSKSPKRKSS. Thr-237 is subject to Phosphothreonine. A phosphoserine mark is found at Ser-238 and Ser-242. The span at 239-254 shows a compositional bias: polar residues; sequence AVSSPLLDQQRNSKTN. Phosphothreonine is present on Thr-263. Phosphoserine is present on Ser-265. Over residues 283–315 the composition is skewed to basic and acidic residues; it reads KYKVKDRIEEKTRDGKDRGRDFERQREKRDKPR. 4 positions are modified to phosphoserine: Ser-316, Ser-318, Ser-325, and Ser-328. Positions 323-346 are enriched in low complexity; it reads HHSPISSRHHSSSSQSGSSIQRHS. 2 positions are modified to phosphothreonine: Thr-354 and Thr-364. Phosphoserine occurs at positions 370, 372, and 381. The span at 370–382 shows a compositional bias: low complexity; sequence SASPYPSHSLSSP. 2 stretches are compositionally biased toward basic and acidic residues: residues 394 to 434 and 442 to 575; these read PMRE…REER and SSRD…EKGS. Residues 584–593 are compositionally biased toward low complexity; sequence DSHSSNSNYH. The span at 594–640 shows a compositional bias: basic and acidic residues; that stretch reads DSWETRSSYPERDRYPERDNRDQARDSSFERRHGERDRRDNRERDQR. A Phosphoserine modification is found at Ser-643. Positions 645–789 form a coiled coil; the sequence is IRHQGRNDEL…RDKERERQRD (145 aa). Positions 649–821 are enriched in basic and acidic residues; it reads GRNDELERDE…NPRDGHDERK (173 aa). A phosphoserine mark is found at Ser-831, Ser-833, Ser-837, Ser-845, Ser-848, Ser-853, Ser-873, Ser-875, and Ser-877. Over residues 881-957 the composition is skewed to basic and acidic residues; sequence LTEDRQGRWK…TSDRAHDENK (77 aa). Residue Thr-882 is modified to Phosphothreonine. Ser-943 carries the post-translational modification Phosphoserine. The segment covering 958 to 969 has biased composition (basic residues); sequence KKAKIQKKPIKK. A compositionally biased stretch (basic and acidic residues) spans 970–981; it reads KKEDDVGIERGN. 5 positions are modified to phosphoserine: Ser-986, Ser-993, Ser-1010, Ser-1014, and Ser-1017. Residues 996–1010 are compositionally biased toward basic residues; that stretch reads KGQKKKSIEKKRKKS. The residue at position 1033 (Thr-1033) is a Phosphothreonine. Over residues 1073–1083 the composition is skewed to basic and acidic residues; sequence PDRTEVTEAEH. Composition is skewed to low complexity over residues 1084–1100 and 1125–1153; these read TATA…LSSL and AAAT…TFAN. Residues 1163–1188 show a composition bias toward basic and acidic residues; sequence TRVEKVETPHVTIEDAQHRKPMDQKR. Thr-1170 carries the phosphothreonine modification. Phosphoserine occurs at positions 1191, 1194, 1208, and 1210. A compositionally biased stretch (basic and acidic residues) spans 1213-1223; sequence SAHRSGDDQSG. Position 1230 is a phosphoserine (Ser-1230). Composition is skewed to basic and acidic residues over residues 1231–1286 and 1294–1379; these read GSRD…DRQV and DSRD…DRTF. Residues 1300 to 1366 adopt a coiled-coil conformation; sequence QERDRYEHDR…RERERLISDS (67 aa). Phosphoserine is present on residues Ser-1364, Ser-1366, Ser-1382, Ser-1386, Ser-1406, Ser-1409, Ser-1438, Leu-1453, Gly-1456, Ser-1465, and Asp-1466. Composition is skewed to basic and acidic residues over residues 1386-1421 and 1429-1438; these read SVKR…DKDL and ETNKSERTES.

The protein belongs to the ZC3H13 family. Component of the WMM complex, a N6-methyltransferase complex composed of a catalytic subcomplex, named MAC, and of an associated subcomplex, named MACOM. The MAC subcomplex is composed of METTL3 and METTL14. The MACOM subcomplex is composed of WTAP, ZC3H13, CBLL1/HAKAI, VIRMA, and, in some cases of RBM15 (RBM15 or RBM15B). Also a component of a MACOM-like complex, named WTAP complex, composed of WTAP, ZC3H13, CBLL1/HAKAI, VIRMA, RBM15, BCLAF1 and THRAP3.

The protein localises to the nucleus speckle. It is found in the nucleus. It localises to the nucleoplasm. Its function is as follows. Associated component of the WMM complex, a complex that mediates N6-methyladenosine (m6A) methylation of RNAs, a modification that plays a role in the efficiency of mRNA splicing and RNA processing. Acts as a key regulator of m6A methylation by promoting m6A methylation of mRNAs at the 3'-UTR. Controls embryonic stem cells (ESCs) pluripotency via its role in m6A methylation. In the WMM complex, anchors component of the MACOM subcomplex in the nucleus. Also required for bridging WTAP to the RNA-binding component RBM15 (RBM15 or RBM15B). In Homo sapiens (Human), this protein is Zinc finger CCCH domain-containing protein 13.